Reading from the N-terminus, the 1053-residue chain is Polyphosphate kinase (1053 aa).

3 disordered regions span residues L23–E155, V200–K245, and N302–P328. A compositionally biased stretch (low complexity) spans S32–S50. Residues V81–A102 are compositionally biased toward acidic residues. Polar residues predominate over residues T143–E155. The segment covering S215–S239 has biased composition (low complexity). Catalysis depends on H800, which acts as the Phosphohistidine intermediate. The interval R1027–K1053 is disordered. The span at Q1036–K1046 shows a compositional bias: polar residues.

It belongs to the polyphosphate kinase 1 (PPK1) family. As to quaternary structure, hexamer. May form higher oligomeric structures in the presence of ATP.

Its subcellular location is the vesicle. It catalyses the reaction [phosphate](n) + ATP = [phosphate](n+1) + ADP. Functionally, catalyzes the reversible transfer of the terminal phosphate of ATP to form a long-chain polyphosphate (polyP). Produces polyP in a broad range of chain lengths (50-300 Pi residues). Involved in development (growth and fruiting body formation), sporulation, phagocytosis, cell division and the late stages of cytokinesis. This chain is Polyphosphate kinase (ppkA), found in Dictyostelium discoideum (Social amoeba).